A 314-amino-acid chain; its full sequence is Olfactory receptor 5P72 (314 aa).

Residues 1-28 (MAFLEVGNHTAVTEFILLGLTDDPVLRV) are Extracellular-facing. N-linked (GlcNAc...) asparagine glycosylation occurs at asparagine 8. Residues 29 to 49 (VLFTIILCIYLVTVMGNLSTI) form a helical membrane-spanning segment. The Cytoplasmic segment spans residues 50–57 (LLIRVSSQ). Residues 58-78 (LHHPMYFFLSHLASVDMGLSS) traverse the membrane as a helical segment. Residues 79–102 (SVTPNMLLNFLIERNTISYLGCGI) lie on the Extracellular side of the membrane. An intrachain disulfide couples cysteine 100 to cysteine 192. Residues 103 to 123 (QQSLADFFGSVECFLLAAMAY) form a helical membrane-spanning segment. Over 124–136 (DRFMAICNPLLYS) the chain is Cytoplasmic. The chain crosses the membrane as a helical span at residues 137–157 (TKMSTKVCVQLVVGSYIGGFL). The Extracellular segment spans residues 158 to 199 (NASLIMFYFFSFLFCGPNRVDHFFCDFAPLVELSCSDVSVSV). Residues 200-220 (IVISFSAGSVTMITVFVIAVS) traverse the membrane as a helical segment. Residues 221–240 (YSYILITILKMHSIEGRHKA) lie on the Cytoplasmic side of the membrane. The helical transmembrane segment at 241–261 (FSTCTSHLTAVTLYYGTITFI) threads the bilayer. Over 262-274 (YVMPKSSFSTDQN) the chain is Extracellular. A helical transmembrane segment spans residues 275–295 (KVVSVFYMVMIPMLNPLIYSL). Residues 296–314 (RNNEIKGAIKRQLGKKMSC) are Cytoplasmic-facing.

This sequence belongs to the G-protein coupled receptor 1 family.

It localises to the cell membrane. Functionally, potential odorant receptor. The chain is Olfactory receptor 5P72 from Mus musculus (Mouse).